The following is a 379-amino-acid chain: Chaperone protein DnaJ (379 aa).

The region spanning 5 to 69 (DYYEVLGISK…NKRASYDQFG (65 aa)) is the J domain. A CR-type zinc finger spans residues 136–218 (GTTKEISIRK…CHGKGTENKT (83 aa)). Zn(2+) contacts are provided by cysteine 149, cysteine 152, cysteine 166, cysteine 169, cysteine 192, cysteine 195, cysteine 206, and cysteine 209. CXXCXGXG motif repeat units follow at residues 149 to 156 (CETCHGDG), 166 to 173 (CSYCNGAG), 192 to 199 (CPKCNGSG), and 206 to 213 (CPTCHGKG).

This sequence belongs to the DnaJ family. As to quaternary structure, homodimer. Requires Zn(2+) as cofactor.

It is found in the cytoplasm. Participates actively in the response to hyperosmotic and heat shock by preventing the aggregation of stress-denatured proteins and by disaggregating proteins, also in an autonomous, DnaK-independent fashion. Unfolded proteins bind initially to DnaJ; upon interaction with the DnaJ-bound protein, DnaK hydrolyzes its bound ATP, resulting in the formation of a stable complex. GrpE releases ADP from DnaK; ATP binding to DnaK triggers the release of the substrate protein, thus completing the reaction cycle. Several rounds of ATP-dependent interactions between DnaJ, DnaK and GrpE are required for fully efficient folding. Also involved, together with DnaK and GrpE, in the DNA replication of plasmids through activation of initiation proteins. The polypeptide is Chaperone protein DnaJ (Staphylococcus aureus (strain bovine RF122 / ET3-1)).